The following is a 380-amino-acid chain: Cytochrome b (380 aa).

4 helical membrane passes run 33-53 (FGSLLGACLIIQTITGLFLAM), 77-98 (WMIRHLHANGASMLFICLFLHI), 113-133 (WNIGIILLFMTMMTAFMGYVL), and 178-198 (FFTLHFMLPFIITALTTLHLL). H83 and H97 together coordinate heme b. Heme b-binding residues include H182 and H196. H201 serves as a coordination point for a ubiquinone. A run of 4 helical transmembrane segments spans residues 226-246 (IKDILGLLLFLLALMTLTLLS), 288-308 (LGGVMALMLSILILTTIPALH), 320-340 (LSQFLYWLLITDLLVLTWIGG), and 347-367 (FITIGQVASVLYFTTILLLMP).

It belongs to the cytochrome b family. In terms of assembly, the cytochrome bc1 complex contains 11 subunits: 3 respiratory subunits (MT-CYB, CYC1 and UQCRFS1), 2 core proteins (UQCRC1 and UQCRC2) and 6 low-molecular weight proteins (UQCRH/QCR6, UQCRB/QCR7, UQCRQ/QCR8, UQCR10/QCR9, UQCR11/QCR10 and a cleavage product of UQCRFS1). This cytochrome bc1 complex then forms a dimer. The cofactor is heme b.

It localises to the mitochondrion inner membrane. Its function is as follows. Component of the ubiquinol-cytochrome c reductase complex (complex III or cytochrome b-c1 complex) that is part of the mitochondrial respiratory chain. The b-c1 complex mediates electron transfer from ubiquinol to cytochrome c. Contributes to the generation of a proton gradient across the mitochondrial membrane that is then used for ATP synthesis. The sequence is that of Cytochrome b (MT-CYB) from Pongo pygmaeus (Bornean orangutan).